The primary structure comprises 275 residues: Tropinone reductase-like 2 (275 aa).

Residue 17–41 (IITGGASGIGACTAELFHENGAKVV) participates in NAD(+) binding. Serine 150 lines the substrate pocket. The active-site Proton acceptor is the tyrosine 163.

Belongs to the short-chain dehydrogenases/reductases (SDR) family.

In terms of biological role, has no tropinone reductase activity. This Erythroxylum coca (Coca plant) protein is Tropinone reductase-like 2.